Here is a 106-residue protein sequence, read N- to C-terminus: UPF0145 protein BF0270 (106 aa).

This sequence belongs to the UPF0145 family.

The polypeptide is UPF0145 protein BF0270 (Bacteroides fragilis (strain YCH46)).